We begin with the raw amino-acid sequence, 235 residues long: Large ribosomal subunit protein uL1 (235 aa).

Residues M1 to T22 are disordered.

It belongs to the universal ribosomal protein uL1 family. In terms of assembly, part of the 50S ribosomal subunit.

Binds directly to 23S rRNA. The L1 stalk is quite mobile in the ribosome, and is involved in E site tRNA release. In terms of biological role, protein L1 is also a translational repressor protein, it controls the translation of the L11 operon by binding to its mRNA. The protein is Large ribosomal subunit protein uL1 of Mycobacterium ulcerans (strain Agy99).